Here is a 168-residue protein sequence, read N- to C-terminus: GPI-anchored protein LLG1 (168 aa).

The first 23 residues, 1 to 23, serve as a signal peptide directing secretion; the sequence is MELLSRALFFFLLLSVLSSFSSS. Asn-57 carries an N-linked (GlcNAc...) asparagine glycan. Asn-144 carries the GPI-anchor amidated asparagine lipid modification. The propeptide at 145–168 is removed in mature form; it reads AATTSSSRLWLTVSAALLVFVKLF.

As to quaternary structure, interacts with FER. As to expression, expressed in pollen, pollen tubes, sporophytic pistil tissues, in the early stages of female gametophyte development, and in unfertilized, mature ovules. Expressed in roots, lateral roots, shoots, cotyledons, petioles, developing leaves and anther filaments.

It is found in the cell membrane. Component of the FER-regulated Rho GTPase signaling complex. Acts as a chaperone and coreceptor for FER. Required for localization of FER to the plasma membrane. This is GPI-anchored protein LLG1 from Arabidopsis thaliana (Mouse-ear cress).